Consider the following 246-residue polypeptide: Electron transfer flavoprotein beta subunit lysine methyltransferase (246 aa).

Belongs to the methyltransferase superfamily. ETFBKMT family.

It is found in the cytoplasm. It localises to the mitochondrion matrix. The catalysed reaction is L-lysyl-[protein] + 3 S-adenosyl-L-methionine = N(6),N(6),N(6)-trimethyl-L-lysyl-[protein] + 3 S-adenosyl-L-homocysteine + 3 H(+). Protein-lysine methyltransferase that selectively trimethylates the flavoprotein ETFB in mitochondria. Thereby, may negatively regulate the function of ETFB in electron transfer from Acyl-CoA dehydrogenases to the main respiratory chain. This chain is Electron transfer flavoprotein beta subunit lysine methyltransferase (etfbkmt), found in Xenopus laevis (African clawed frog).